The sequence spans 181 residues: Isopentenyl-diphosphate Delta-isomerase (181 aa).

The Mn(2+) site is built by His-25 and His-32. In terms of domain architecture, Nudix hydrolase spans 30–164 (PLHLAFSCWL…PWAFSPWMVM (135 aa)). Residue Cys-67 is part of the active site. Position 69 (His-69) interacts with Mn(2+). Residue Glu-87 coordinates Mg(2+). Positions 114 and 116 each coordinate Mn(2+). The active site involves Glu-116.

It belongs to the IPP isomerase type 1 family. In terms of assembly, homodimer. Requires Mg(2+) as cofactor. The cofactor is Mn(2+).

The protein localises to the cytoplasm. The enzyme catalyses isopentenyl diphosphate = dimethylallyl diphosphate. It functions in the pathway isoprenoid biosynthesis; dimethylallyl diphosphate biosynthesis; dimethylallyl diphosphate from isopentenyl diphosphate: step 1/1. In terms of biological role, catalyzes the 1,3-allylic rearrangement of the homoallylic substrate isopentenyl (IPP) to its highly electrophilic allylic isomer, dimethylallyl diphosphate (DMAPP). In Salmonella paratyphi B (strain ATCC BAA-1250 / SPB7), this protein is Isopentenyl-diphosphate Delta-isomerase.